Here is a 147-residue protein sequence, read N- to C-terminus: uncharacterized protein (147 aa).

The segment at Glu23–Phe48 is disordered. Residues Pro28 to Ser37 are compositionally biased toward polar residues. The span at Thr38–Phe48 shows a compositional bias: basic and acidic residues. A helical membrane pass occupies residues Leu85–Ile105.

The protein localises to the membrane. This is an uncharacterized protein from Saccharomyces cerevisiae (strain ATCC 204508 / S288c) (Baker's yeast).